The primary structure comprises 362 residues: Dihydroorotate dehydrogenase (quinone) (362 aa).

FMN is bound by residues 62 to 66 (AGYDK) and Thr-86. Substrate is bound at residue Lys-66. Residue 111–115 (NRLGF) participates in substrate binding. FMN is bound by residues Asn-139 and Asn-170. Asn-170 is a binding site for substrate. Residue Ser-173 is the Nucleophile of the active site. Asn-175 lines the substrate pocket. Residues Lys-215 and Ser-243 each contribute to the FMN site. 244 to 245 (NT) is a substrate binding site. Residues Gly-266, Gly-295, and 316-317 (YS) each bind FMN.

It belongs to the dihydroorotate dehydrogenase family. Type 2 subfamily. Monomer. FMN serves as cofactor.

It is found in the cell membrane. The enzyme catalyses (S)-dihydroorotate + a quinone = orotate + a quinol. It functions in the pathway pyrimidine metabolism; UMP biosynthesis via de novo pathway; orotate from (S)-dihydroorotate (quinone route): step 1/1. Functionally, catalyzes the conversion of dihydroorotate to orotate with quinone as electron acceptor. In Rhizobium etli (strain ATCC 51251 / DSM 11541 / JCM 21823 / NBRC 15573 / CFN 42), this protein is Dihydroorotate dehydrogenase (quinone).